Reading from the N-terminus, the 90-residue chain is MIYLKNKEDVIRMEGTIVEALPNAMFRVQLDNGFKVLAHVSGKMRKNFIRLVPGDRVVVELTIYDLTRGRIVYRKKLDSKGEEEILDDDE.

Positions 7 to 76 (KEDVIRMEGT…TRGRIVYRKK (70 aa)) constitute an S1-like domain.

The protein belongs to the IF-1 family. Component of the 30S ribosomal translation pre-initiation complex which assembles on the 30S ribosome in the order IF-2 and IF-3, IF-1 and N-formylmethionyl-tRNA(fMet); mRNA recruitment can occur at any time during PIC assembly.

The protein localises to the cytoplasm. Functionally, one of the essential components for the initiation of protein synthesis. Stabilizes the binding of IF-2 and IF-3 on the 30S subunit to which N-formylmethionyl-tRNA(fMet) subsequently binds. Helps modulate mRNA selection, yielding the 30S pre-initiation complex (PIC). Upon addition of the 50S ribosomal subunit IF-1, IF-2 and IF-3 are released leaving the mature 70S translation initiation complex. This Fervidobacterium nodosum (strain ATCC 35602 / DSM 5306 / Rt17-B1) protein is Translation initiation factor IF-1.